Reading from the N-terminus, the 29-residue chain is U-limacoditoxin(12)-Dv72 (29 aa).

The N-terminal stretch at Met-1 to Cys-15 is a signal peptide. Asn-27 carries the asparagine amide modification.

Belongs to the limacoditoxin-12 family. In terms of tissue distribution, expressed by the venom secretory cell of the spine. The spine is a cuticular structure containing a single large nucleated venom-secreting cell at its base. It is an independent unit capable of producing, storing and injecting venom. On the back of D.vulnerans caterpillars, spines are grouped together by 50 to 100 to form scoli, of which there are eight in D.vulnerans.

It is found in the secreted. Probable toxin. Does not show insecticidal, antimicrobial and antiparasitic activities. Does not induce increase in intracellular calcium in mouse DRG neurons, suggesting that it does not induce pain. The chain is U-limacoditoxin(12)-Dv72 from Doratifera vulnerans (Mottled cup moth).